The sequence spans 233 residues: Uracil-DNA glycosylase (233 aa).

The active-site Proton acceptor is Asp70.

Belongs to the uracil-DNA glycosylase (UDG) superfamily. UNG family.

The protein resides in the cytoplasm. The catalysed reaction is Hydrolyzes single-stranded DNA or mismatched double-stranded DNA and polynucleotides, releasing free uracil.. Its function is as follows. Excises uracil residues from the DNA which can arise as a result of misincorporation of dUMP residues by DNA polymerase or due to deamination of cytosine. The polypeptide is Uracil-DNA glycosylase (Helicobacter pylori (strain P12)).